We begin with the raw amino-acid sequence, 357 residues long: Spore coat protein I (357 aa).

Belongs to the CotS family.

It localises to the spore coat. The polypeptide is Spore coat protein I (cotI) (Bacillus subtilis (strain 168)).